The chain runs to 334 residues: Putative violet-sensitive opsin (334 aa).

The Extracellular segment spans residues 1 to 29 (MGKYFYLYENISKVGPYDGPQYYLAPTWA). Residue asparagine 10 is glycosylated (N-linked (GlcNAc...) asparagine). Residues 30–54 (FYLQAAFMGFVFFVGTPLNFVVLLA) form a helical membrane-spanning segment. The Cytoplasmic segment spans residues 55-66 (TAKYKKLRVPLN). The helical transmembrane segment at 67 to 88 (YILVNITFAGFIFVTFSVSQVF) threads the bilayer. The Extracellular portion of the chain corresponds to 89–106 (LASVRGYYFFGQTLCALE). An intrachain disulfide couples cysteine 103 to cysteine 179. The chain crosses the membrane as a helical span at residues 107 to 126 (AAVGAVAGLVTSWSLAVLSF). Topologically, residues 127-145 (ERYLVICKPFGAFKFGSNH) are cytoplasmic. The chain crosses the membrane as a helical span at residues 146–168 (ALAAVIFTWFMGVVRCPPFFGWS). The Extracellular portion of the chain corresponds to 169-194 (RYIPEGLGCSCGPDWYTNCEEFSCAS). The chain crosses the membrane as a helical span at residues 195–222 (YSKFLLVTCFICPITIIIFSYSQLLGAL). Residues 223–244 (RAVAAQQAESASTQKAEKEVSR) lie on the Cytoplasmic side of the membrane. The chain crosses the membrane as a helical span at residues 245–272 (MIIVMVASFVTCYGPYALTAQYYAYSQD). Residues 273–279 (ENKDYRL) lie on the Extracellular side of the membrane. A helical transmembrane segment spans residues 280-301 (VTIPAFFSKSSCVYNPLIYAFM). Residue lysine 288 is modified to N6-(retinylidene)lysine. The Cytoplasmic portion of the chain corresponds to 302 to 334 (NKQFNGCIMEMVFGKKMEEASEVSSKTEVSTDS).

The protein belongs to the G-protein coupled receptor 1 family. Opsin subfamily. Post-translationally, phosphorylated on some or all of the serine and threonine residues present in the C-terminal region. In terms of tissue distribution, the three color pigments are found in the cone photoreceptor cells.

It is found in the membrane. Visual pigments are the light-absorbing molecules that mediate vision. They consist of an apoprotein, opsin, covalently linked to cis-retinal. This is Putative violet-sensitive opsin from Oryzias latipes (Japanese rice fish).